Reading from the N-terminus, the 176-residue chain is Large ribosomal subunit protein uL6 (176 aa).

Belongs to the universal ribosomal protein uL6 family. Part of the 50S ribosomal subunit.

Its function is as follows. This protein binds to the 23S rRNA, and is important in its secondary structure. It is located near the subunit interface in the base of the L7/L12 stalk, and near the tRNA binding site of the peptidyltransferase center. The protein is Large ribosomal subunit protein uL6 of Burkholderia thailandensis (strain ATCC 700388 / DSM 13276 / CCUG 48851 / CIP 106301 / E264).